The chain runs to 150 residues: Large ribosomal subunit protein bL9 (150 aa).

Belongs to the bacterial ribosomal protein bL9 family.

In terms of biological role, binds to the 23S rRNA. The sequence is that of Large ribosomal subunit protein bL9 from Limosilactobacillus reuteri (strain DSM 20016) (Lactobacillus reuteri).